A 1157-amino-acid polypeptide reads, in one-letter code: MACPWKFLFKAKSSRFDLTEEKDINNNLEKLRQASSSPVTQDDPKCPSRSRHRNECSQPLAETAKKSPDSLVKLDVLPPACPRHVRIKNWGSGMTFQDTLHREAKGDLACKSKSCLGAIMNPKSLTIGPRDKPTPPDELLPQAIEFVNLYYSSFKEAKIEEHLARVEAVTKEIETTGTYQLTGDELIFAAKQAWRNAPRCIGRIQWSNLQVFDARSCSTAQEMFEHICRHLRYATNNGNIRSAITVFPQRSDGKHDFRVWNAQLIRYAGYQMPDGTIIGDPASVEFTQLCIDLGWKPKYGRFDVVPLVLQADGRDPELFEIPPDLVLEVPMEHPKYEWFQELELKWYALPAVANMLLEVGGLEFPGCPFNGWYMGTEIGVRDFCDVQRYNILEEVGRRMGLETHKLASLWKDRAVVEINVAVLHSFQKQNVTIMDHHSAAESFMKYMQNEYRSRGGCPADWIWLVPPISGSITPVFHQEMLNYVLSPFYYYQVEAWKTHVWQDEKRRPRRKEIRFKVLVKAVLFAAVLMHKTMAARVRATILFATETGRSETLARDLGALFSCAFNPKVLCMDEYRLSRLEEEQLLLVVTSTFGNGGSPGNGEKLKKSLFMLKELTNKFRYAVFGLGSSMYPQFCAFAHDVDQKLSHLGASQLTPTGEGDELSGQEEAFRGWAVQTFKVACETFDVRGKHHIQIPKLYTSNVTWDPQLYRLVQDSEPLDLNKALSSMHAKYVFSMRLKSQQNLQSPQSSRTTLLVELCCEGSQGPSYLPGEHLGVFPANQPALVQGILERVVDGPAPHQPVRLETLSENGSYWVKDKRLPPCSLSQALTYFLDITTPPTQLLLRKLAQLATDEAERQRLETLCQPSDYNKWKFTNSPTFLEVLEEFPSLRVSASFLLSQLPILKPRYYSISSSRDRTPTEIHLTVAVLTYRTRDGQGPLHHGVCSTWLSSLKPQDLVPCFVRSASGFQLPEDPSRPCILIGPGTGIAPFRSFWQQRLHEAEHKGLQGGRMTLVFGCRRPDEDHLYQEEMLEMARKGVLHEVHTAYSRLPGQPKVYVQDLLRQRLAGEVLRVLHEEQGHLYVCGDVRMARDVACTLKQLVATALTLNEEQVEDYFFQLKSQKRYHEDIFGAVFPYEVKKEGAVGPPSDPRAPGAHGKS.

The DINNN-motif; mediates interaction with SPSB1, SPSB2 and SPSB4 signature appears at 23 to 27 (DINNN). Positions 29 to 64 (EKLRQASSSPVTQDDPKCPSRSRHRNECSQPLAETA) are disordered. Residues cysteine 110 and cysteine 115 each coordinate Zn(2+). A heme b-binding site is contributed by cysteine 200. Glutamine 263, tryptophan 372, tyrosine 373, and glutamate 377 together coordinate L-arginine. Residues arginine 381, isoleucine 462, tryptophan 463, and phenylalanine 476 each contribute to the (6R)-L-erythro-5,6,7,8-tetrahydrobiopterin site. Tyrosine 491 is a binding site for heme b. Residues 515–535 (FKVLVKAVLFAAVLMHKTMAA) form a calmodulin-binding region. The 139-residue stretch at 539-677 (ATILFATETG…AFRGWAVQTF (139 aa)) folds into the Flavodoxin-like domain. FMN is bound by residues threonine 545, glutamate 546, threonine 547, arginine 549, serine 550, serine 591, threonine 592, serine 628, cysteine 635, glutamate 661, and glutamine 665. Residues 730–970 (KYVFSMRLKS…VRSASGFQLP (241 aa)) form the FAD-binding FR-type domain. Arginine 750 serves as a coordination point for NADP(+). Histidine 772, arginine 906, tyrosine 908, serine 909, threonine 924, and alanine 926 together coordinate FAD. Residue threonine 929 participates in NADP(+) binding. FAD contacts are provided by tyrosine 930, valine 943, cysteine 944, and serine 945. The NADP(+) site is built by threonine 984, arginine 1017, serine 1046, arginine 1047, lysine 1053, tyrosine 1055, glutamine 1057, and aspartate 1090. Residues 1138–1157 (KEGAVGPPSDPRAPGAHGKS) are disordered.

This sequence belongs to the NOS family. Homodimer. Interacts with NHERF1. Interacts with GAPDH; induced by oxidatively-modified low-densitity lipoprotein (LDL(ox)). Interacts with S100A8 and S100A9 to form the iNOS-S100A8/9 transnitrosylase complex. Interacts with SPSB1, SPSB2 and SPSB4. Interacts with ELOC and CUL5 in the presence of SPSB1 or SPSB2 or SPSB4. Forms a complex with ASL, ASS1 and HSP90AA1; the complex regulates cell-autonomous L-arginine synthesis and citrulline recycling while channeling extracellular L-arginine to nitric oxide synthesis pathway. Heme b is required as a cofactor. FAD serves as cofactor. Requires FMN as cofactor. It depends on (6R)-L-erythro-5,6,7,8-tetrahydrobiopterin as a cofactor. In terms of processing, polyubiquitinated; mediated by SPSB1, SPSB2 and SPSB4, leading to proteasomal degradation. Detected in both stimulated and unstimulated immune cells and macrophages with little or no up-regulation following cellular stimulation with lipopolysaccharides (LPS) or concanavalin A (ConA).

It is found in the cytoplasm. The protein localises to the cytosol. It carries out the reaction 2 L-arginine + 3 NADPH + 4 O2 + H(+) = 2 L-citrulline + 2 nitric oxide + 3 NADP(+) + 4 H2O. Its activity is regulated as follows. Not stimulated by calcium/calmodulin. Its function is as follows. Produces nitric oxide (NO) which is a messenger molecule with diverse functions throughout the body. In macrophages, NO mediates tumoricidal and bactericidal actions. Also has nitrosylase activity and mediates cysteine S-nitrosylation of cytoplasmic target proteins such PTGS2/COX2. As component of the iNOS-S100A8/9 transnitrosylase complex involved in the selective inflammatory stimulus-dependent S-nitrosylation of GAPDH implicated in regulation of the GAIT complex activity and probably multiple targets including ANXA5, EZR, MSN and VIM. Involved in inflammation, enhances the synthesis of pro-inflammatory mediators such as IL6 and IL8. This Sus scrofa (Pig) protein is Nitric oxide synthase, inducible (NOS2).